Reading from the N-terminus, the 233-residue chain is Small ribosomal subunit protein uS3 (233 aa).

Residues 39 to 107 (VRQYLKKELA…PAQINISEVR (69 aa)) form the KH type-2 domain.

Belongs to the universal ribosomal protein uS3 family. As to quaternary structure, part of the 30S ribosomal subunit. Forms a tight complex with proteins S10 and S14.

Its function is as follows. Binds the lower part of the 30S subunit head. Binds mRNA in the 70S ribosome, positioning it for translation. The protein is Small ribosomal subunit protein uS3 of Photorhabdus laumondii subsp. laumondii (strain DSM 15139 / CIP 105565 / TT01) (Photorhabdus luminescens subsp. laumondii).